A 1058-amino-acid chain; its full sequence is Carbamoyl phosphate synthase large chain (1058 aa).

Residues 1 to 401 are carboxyphosphate synthetic domain; sequence MPKRTDIKKI…SLLKACRSLE (401 aa). Residues Arg129, Arg169, Gly175, Gly176, Lys208, Ile210, Glu215, Gly241, Ile242, His243, Gln284, and Glu298 each contribute to the ATP site. Positions 133–327 constitute an ATP-grasp 1 domain; sequence KALMKALKQP…IAKIAAKIAI (195 aa). Mg(2+) is bound by residues Gln284, Glu298, and Asn300. Positions 284, 298, and 300 each coordinate Mn(2+). Positions 402-546 are oligomerization domain; the sequence is IGIYHNECKE…YSTYAFENES (145 aa). Residues 547–929 are carbamoyl phosphate synthetic domain; that stretch reads QASPNKSILV…ALYKAFEASY (383 aa). The 191-residue stretch at 671–861 folds into the ATP-grasp 2 domain; it reads EKALHDINIP…MAQVATKLIL (191 aa). ATP contacts are provided by Arg707, Ser746, Ile748, Glu752, Gly777, Val778, His779, Ser780, Gln820, and Glu832. Gln820, Glu832, and Asn834 together coordinate Mg(2+). Residues Gln820, Glu832, and Asn834 each coordinate Mn(2+). The MGS-like domain occupies 930–1058; sequence MHVPDFGNII…ESRSFSIQSL (129 aa). The segment at 930 to 1058 is allosteric domain; that stretch reads MHVPDFGNII…ESRSFSIQSL (129 aa).

The protein belongs to the CarB family. As to quaternary structure, composed of two chains; the small (or glutamine) chain promotes the hydrolysis of glutamine to ammonia, which is used by the large (or ammonia) chain to synthesize carbamoyl phosphate. Tetramer of heterodimers (alpha,beta)4. The cofactor is Mg(2+). Mn(2+) is required as a cofactor.

It carries out the reaction hydrogencarbonate + L-glutamine + 2 ATP + H2O = carbamoyl phosphate + L-glutamate + 2 ADP + phosphate + 2 H(+). The catalysed reaction is hydrogencarbonate + NH4(+) + 2 ATP = carbamoyl phosphate + 2 ADP + phosphate + 2 H(+). Its pathway is amino-acid biosynthesis; L-arginine biosynthesis; carbamoyl phosphate from bicarbonate: step 1/1. It participates in pyrimidine metabolism; UMP biosynthesis via de novo pathway; (S)-dihydroorotate from bicarbonate: step 1/3. Large subunit of the glutamine-dependent carbamoyl phosphate synthetase (CPSase). CPSase catalyzes the formation of carbamoyl phosphate from the ammonia moiety of glutamine, carbonate, and phosphate donated by ATP, constituting the first step of 2 biosynthetic pathways, one leading to arginine and/or urea and the other to pyrimidine nucleotides. The large subunit (synthetase) binds the substrates ammonia (free or transferred from glutamine from the small subunit), hydrogencarbonate and ATP and carries out an ATP-coupled ligase reaction, activating hydrogencarbonate by forming carboxy phosphate which reacts with ammonia to form carbamoyl phosphate. This chain is Carbamoyl phosphate synthase large chain, found in Streptococcus uberis (strain ATCC BAA-854 / 0140J).